An 88-amino-acid polypeptide reads, in one-letter code: Eclosion hormone (88 aa).

The signal sequence occupies residues 1-26 (MANKLTAVIVVALAVAFMVNLDYANC). Intrachain disulfides connect cysteine 40-cysteine 64, cysteine 44-cysteine 60, and cysteine 47-cysteine 75.

This sequence belongs to the insect eclosion hormone family.

It is found in the secreted. Neuropeptide that triggers the performance of ecdysis behaviors at the end of a molt. It triggers adult behavior patterns: larval, pupal and adult ecdysis, and plasticization during the molt. In Bombyx mori (Silk moth), this protein is Eclosion hormone.